The following is a 912-amino-acid chain: WD repeat-containing protein 44 (912 aa).

The segment covering 1–14 (MASESDTEEFFDAP) has biased composition (acidic residues). Residues 1–25 (MASESDTEEFFDAPEDVHLEGGDPI) form a disordered region. Ala-2 is modified (N-acetylalanine). The binding activity stretch occupies residues 2-170 (ASESDTEEFF…SSTAQLNVPE (169 aa)). The residue at position 3 (Ser-3) is a Phosphoserine. Residues 9-15 (EFFDAPE) carry the FFAT-like motif motif. A phosphoserine mark is found at Ser-50, Ser-66, Ser-71, Ser-81, Ser-96, and Ser-126. Disordered regions lie at residues 79 to 104 (DDSL…GTEL) and 118 to 152 (QEDS…KPVD). Residues 89-104 (QSDQATASPVTAGTEL) are compositionally biased toward polar residues. A Phosphothreonine modification is found at Thr-158. 5 disordered regions span residues 183–202 (VKES…TKDF), 207–279 (EVAP…PKEN), 318–349 (QENG…ELTD), 396–422 (SNDA…RLKQ), and 457–479 (RDEV…MPYT). The important for interaction with ARHGAP26 AND ARHGAP10 stretch occupies residues 210–256 (PAKPPRQLTPEPDIVASTKKPVPARPPPPANFPPPRPPPPSRPAPPP). Residue Thr-218 is modified to Phosphothreonine. Residues 232–255 (PARPPPPANFPPPRPPPPSRPAPP) are compositionally biased toward pro residues. A Phosphoserine modification is found at Ser-261. The segment covering 261–277 (SELEFEALKTPDLDVPK) has biased composition (basic and acidic residues). Thr-270 is subject to Phosphothreonine. Positions 333 to 346 (VMGPQRPRSNSGRE) are important for interaction with RAB11A. Residues 334–504 (MGPQRPRSNS…DFDQIKVVQD (171 aa)) form an interaction with RAB11 region. Phosphoserine is present on residues Ser-341 and Ser-343. Thr-348 is subject to Phosphothreonine. Residues Ser-402, Ser-469, Ser-470, and Ser-471 each carry the phosphoserine modification. Positions 466 to 475 (DDPSSSDDEG) are enriched in acidic residues. Phosphotyrosine is present on Tyr-478. Residues 508 to 547 (EHMGAVWTMKFSHCGRLLASAGQDNVVRIWALKNAFDYFN) form a WD 1 repeat. A disordered region spans residues 556 to 592 (EGRVSPSPSQESLNSSKSDTDTGVCSGTDEDPDDKNA). 2 positions are modified to phosphoserine: Ser-560 and Ser-564. Residues 560–572 (SPSPSQESLNSSK) are compositionally biased toward low complexity. WD repeat units lie at residues 604–642 (GHTA…CLCC), 644–684 (QHID…VALW), 689–728 (GQTK…YHTQ), 739–778 (KVGR…LSMK), 783–822 (VNSS…SKFT), and 871–912 (EDAE…KNLS).

As to quaternary structure, interacts with the GTP-bound form of RAB11A when membrane-associated. Interacts with GRAF1/ARHGAP26 or GRAF2/ARHGAP10; the interaction connects the endoplasmic reticulum (ER) with the endosomal tubule. Interacts (via FFAT-like motif) with VAPA (via MSP domain) or VAPB (via MSP domain); the interaction connects the ER with the endosomal tubule. Does not bind to other Rab and Rho small G proteins. Post-translationally, phosphorylated by ATK1; the phosphorylation stabilizes its interaction with RAB11A and RAB11B. In terms of tissue distribution, highly expressed in brain.

It localises to the cytoplasm. The protein localises to the cytosol. It is found in the perinuclear region. Its subcellular location is the endosome membrane. The protein resides in the golgi apparatus. It localises to the trans-Golgi network. In terms of biological role, downstream effector for Rab11 which regulates Rab11 intracellular membrane trafficking functions such as endocytic recycling, intracellular ciliogenesis and protein export. ATK1-mediated phosphorylation of WDR44 induces binding to Rab11 which activates endocytic recycling of transferrin receptor back to the plasma membrane. When bound to Rab11, prevents the formation of the ciliogenic Rab11-Rabin8/RAB3IP-RAB11FIP3 complex, therefore inhibiting preciliary trafficking and ciliogenesis. Participates in neo-synthesized protein export by connecting the endoplasmic reticulum (ER) with the endosomal tubule via direct interactions with the integral ER proteins VAPA or VAPB and the endosomal protein GRAFs (GRAF1/ARHGAP26 or GRAF2/ARHGAP10), which facilitates the transfer of proteins such as E-cadherin, MPP14 and CFTR into a Rab8-Rab10-Rab11-dependent export route. This Bos taurus (Bovine) protein is WD repeat-containing protein 44 (WDR44).